The primary structure comprises 287 residues: Probable endoribonuclease YicC (287 aa).

This sequence belongs to the YicC/YloC family. A divalent metal cation serves as cofactor.

Functionally, probably a ssRNA endonuclease. Its function is as follows. Might contribute to small RNA (sRNA) regulation. The sequence is that of Probable endoribonuclease YicC from Haemophilus influenzae (strain ATCC 51907 / DSM 11121 / KW20 / Rd).